We begin with the raw amino-acid sequence, 273 residues long: Imidazole glycerol phosphate synthase subunit HisF (273 aa).

Catalysis depends on residues Asp-11 and Asp-134.

This sequence belongs to the HisA/HisF family. Heterodimer of HisH and HisF.

Its subcellular location is the cytoplasm. It carries out the reaction 5-[(5-phospho-1-deoxy-D-ribulos-1-ylimino)methylamino]-1-(5-phospho-beta-D-ribosyl)imidazole-4-carboxamide + L-glutamine = D-erythro-1-(imidazol-4-yl)glycerol 3-phosphate + 5-amino-1-(5-phospho-beta-D-ribosyl)imidazole-4-carboxamide + L-glutamate + H(+). The protein operates within amino-acid biosynthesis; L-histidine biosynthesis; L-histidine from 5-phospho-alpha-D-ribose 1-diphosphate: step 5/9. In terms of biological role, IGPS catalyzes the conversion of PRFAR and glutamine to IGP, AICAR and glutamate. The HisF subunit catalyzes the cyclization activity that produces IGP and AICAR from PRFAR using the ammonia provided by the HisH subunit. The sequence is that of Imidazole glycerol phosphate synthase subunit HisF from Methanocella arvoryzae (strain DSM 22066 / NBRC 105507 / MRE50).